The primary structure comprises 427 residues: Trigger factor (427 aa).

Residues 163-248 enclose the PPIase FKBP-type domain; that stretch reads GDTVVIDFVG…IHEVKTKEVP (86 aa).

Belongs to the FKBP-type PPIase family. Tig subfamily.

It is found in the cytoplasm. It carries out the reaction [protein]-peptidylproline (omega=180) = [protein]-peptidylproline (omega=0). In terms of biological role, involved in protein export. Acts as a chaperone by maintaining the newly synthesized protein in an open conformation. Functions as a peptidyl-prolyl cis-trans isomerase. In Streptococcus agalactiae serotype Ia (strain ATCC 27591 / A909 / CDC SS700), this protein is Trigger factor.